The following is a 601-amino-acid chain: Elongation factor 4 (601 aa).

Residues 2–184 enclose the tr-type G domain; sequence DLIRNFSIIA…EMIARVPPPT (183 aa). Residues 14–19 and 131–134 each bind GTP; these read DHGKST and NKID.

This sequence belongs to the TRAFAC class translation factor GTPase superfamily. Classic translation factor GTPase family. LepA subfamily.

The protein localises to the cell inner membrane. The enzyme catalyses GTP + H2O = GDP + phosphate + H(+). Its function is as follows. Required for accurate and efficient protein synthesis under certain stress conditions. May act as a fidelity factor of the translation reaction, by catalyzing a one-codon backward translocation of tRNAs on improperly translocated ribosomes. Back-translocation proceeds from a post-translocation (POST) complex to a pre-translocation (PRE) complex, thus giving elongation factor G a second chance to translocate the tRNAs correctly. Binds to ribosomes in a GTP-dependent manner. The polypeptide is Elongation factor 4 (Polynucleobacter necessarius subsp. necessarius (strain STIR1)).